The sequence spans 107 residues: Sperm-specific class P protein 34 (107 aa).

Residues 1-26 (MINVDPPTGNYPATGGNSTHNITSES) form a disordered region. Positions 1–107 (MINVDPPTGN…GEIIVKLIAA (107 aa)) constitute an MSP domain. A compositionally biased stretch (polar residues) spans 15–25 (GGNSTHNITSE).

Expressed at higher level in testis.

This is Sperm-specific class P protein 34 (ssp-34) from Caenorhabditis elegans.